Here is a 109-residue protein sequence, read N- to C-terminus: T cell receptor alpha variable 26-1 (109 aa).

An N-terminal signal peptide occupies residues Met1–Ala19. One can recognise an Ig-like domain in the interval Lys20 to Val109. Residues Cys39 and Cys105 are joined by a disulfide bond. 2 N-linked (GlcNAc...) asparagine glycosylation sites follow: Asn40 and Asn71.

In terms of assembly, alpha-beta TR is a heterodimer composed of an alpha and beta chain; disulfide-linked. The alpha-beta TR is associated with the transmembrane signaling CD3 coreceptor proteins to form the TR-CD3 (TcR or TCR). The assembly of alpha-beta TR heterodimers with CD3 occurs in the endoplasmic reticulum where a single alpha-beta TR heterodimer associates with one CD3D-CD3E heterodimer, one CD3G-CD3E heterodimer and one CD247 homodimer forming a stable octameric structure. CD3D-CD3E and CD3G-CD3E heterodimers preferentially associate with TR alpha and TR beta chains, respectively. The association of the CD247 homodimer is the last step of TcR assembly in the endoplasmic reticulum and is required for transport to the cell surface.

The protein resides in the cell membrane. V region of the variable domain of T cell receptor (TR) alpha chain that participates in the antigen recognition. Alpha-beta T cell receptors are antigen specific receptors which are essential to the immune response and are present on the cell surface of T lymphocytes. Recognize peptide-major histocompatibility (MH) (pMH) complexes that are displayed by antigen presenting cells (APC), a prerequisite for efficient T cell adaptive immunity against pathogens. Binding of alpha-beta TR to pMH complex initiates TR-CD3 clustering on the cell surface and intracellular activation of LCK that phosphorylates the ITAM motifs of CD3G, CD3D, CD3E and CD247 enabling the recruitment of ZAP70. In turn ZAP70 phosphorylates LAT, which recruits numerous signaling molecules to form the LAT signalosome. The LAT signalosome propagates signal branching to three major signaling pathways, the calcium, the mitogen-activated protein kinase (MAPK) kinase and the nuclear factor NF-kappa-B (NF-kB) pathways, leading to the mobilization of transcription factors that are critical for gene expression and essential for T cell growth and differentiation. The T cell repertoire is generated in the thymus, by V-(D)-J rearrangement. This repertoire is then shaped by intrathymic selection events to generate a peripheral T cell pool of self-MH restricted, non-autoaggressive T cells. Post-thymic interaction of alpha-beta TR with the pMH complexes shapes TR structural and functional avidity. The sequence is that of T cell receptor alpha variable 26-1 from Homo sapiens (Human).